A 1014-amino-acid polypeptide reads, in one-letter code: SUMO-specific isopeptidase USPL1 (1014 aa).

Disordered regions lie at residues 137 to 158 (TFTDQQSAPAETISLDKTEEQP) and 275 to 318 (EEKP…VSDE). The span at 275–289 (EEKPVSLVHTEDQHL) shows a compositional bias: basic and acidic residues. Residues 355–636 (LFWKNEENMC…EFHILFWETD (282 aa)) enclose the USP domain. C364 acts as the Nucleophile in catalysis. The segment at 364–631 (CWLDAMLVML…PFPSSEFHIL (268 aa)) is SUMO-binding. H592 serves as the catalytic Proton acceptor. Disordered regions lie at residues 794–823 (HPSFQSTPIRPPPPLPPAPKPKPSLQYDKH) and 844–867 (NSQPKQISLPGGLNPSVKKTAGQE). Residues 802–815 (IRPPPPLPPAPKPK) are compositionally biased toward pro residues.

Belongs to the peptidase C19 family.

Its subcellular location is the nucleus. The protein resides in the cajal body. Functionally, SUMO-specific isopeptidase involved in protein desumoylation. Specifically binds SUMO proteins with a higher affinity for sumo2 and sumo3 which it cleaves more efficiently. Also able to process full-length SUMO proteins to their mature forms. Plays a key role in RNA polymerase-II-mediated snRNA transcription in the Cajal bodies. Is a component of complexes that can bind to U snRNA genes. This chain is SUMO-specific isopeptidase USPL1 (uspl1), found in Danio rerio (Zebrafish).